A 790-amino-acid polypeptide reads, in one-letter code: Mitochondrial intermediate peptidase (790 aa).

Residues Met-1–Asn-29 constitute a mitochondrion transit peptide. A Zn(2+)-binding site is contributed by His-570. Glu-571 is an active-site residue. Residues His-574 and His-577 each contribute to the Zn(2+) site.

Belongs to the peptidase M3 family. It depends on Zn(2+) as a cofactor.

It is found in the mitochondrion matrix. It carries out the reaction Release of an N-terminal octapeptide as second stage of processing of some proteins imported into the mitochondrion.. Functionally, cleaves proteins, imported into the mitochondrion, to their mature size. While most mitochondrial precursor proteins are processed to the mature form in one step by mitochondrial processing peptidase (MPP), the sequential cleavage by MIP of an octapeptide after initial processing by MPP is a required step for a subgroup of nuclear-encoded precursor proteins destined for the matrix or the inner membrane. This is Mitochondrial intermediate peptidase (OCT1) from Phaeosphaeria nodorum (strain SN15 / ATCC MYA-4574 / FGSC 10173) (Glume blotch fungus).